The chain runs to 337 residues: Hairy/enhancer-of-split related with YRPW motif protein 2 (337 aa).

Positions Met1–Arg52 are disordered. The span at Thr8–Ile18 shows a compositional bias: acidic residues. Over residues Ser22 to Ile46 the composition is skewed to polar residues. The tract at residues Met47–Ala116 is transcriptional repression and interaction with NCOR1 and SIN3A. One can recognise a bHLH domain in the interval Ala48–Leu103. In terms of domain architecture, Orange spans Met122–Leu157. A compositionally biased stretch (polar residues) spans Leu307 to Lys325. The tract at residues Leu307 to Phe337 is disordered. A YRPW motif motif is present at residues Tyr327 to Trp330.

This sequence belongs to the HEY family. In terms of assembly, may self-associate. Interacts with GATA4, HES1 and HEYL. Interacts with HDAC1, NCOR1 and SIN3A. Interacts with ARNT and GATA6.

The protein resides in the nucleus. In terms of biological role, downstream effector of Notch signaling which may be required for cardiovascular development. Transcriptional repressor which binds preferentially to the canonical E box sequence 5'-CACGTG-3'. Represses transcription by the cardiac transcriptional activators GATA4 and GATA6. The sequence is that of Hairy/enhancer-of-split related with YRPW motif protein 2 (HEY2) from Homo sapiens (Human).